We begin with the raw amino-acid sequence, 441 residues long: Tubulin beta chain (441 aa).

Positions 11, 69, 138, 142, 143, 144, 204, and 226 each coordinate GTP. Mg(2+) is bound at residue E69.

It belongs to the tubulin family. In terms of assembly, dimer of alpha and beta chains. A typical microtubule is a hollow water-filled tube with an outer diameter of 25 nm and an inner diameter of 15 nM. Alpha-beta heterodimers associate head-to-tail to form protofilaments running lengthwise along the microtubule wall with the beta-tubulin subunit facing the microtubule plus end conferring a structural polarity. Microtubules usually have 13 protofilaments but different protofilament numbers can be found in some organisms and specialized cells. Mg(2+) is required as a cofactor.

It localises to the cytoplasm. It is found in the cytoskeleton. In terms of biological role, tubulin is the major constituent of microtubules, a cylinder consisting of laterally associated linear protofilaments composed of alpha- and beta-tubulin heterodimers. Microtubules grow by the addition of GTP-tubulin dimers to the microtubule end, where a stabilizing cap forms. Below the cap, tubulin dimers are in GDP-bound state, owing to GTPase activity of alpha-tubulin. The polypeptide is Tubulin beta chain (Babesia bovis).